Here is a 314-residue protein sequence, read N- to C-terminus: Ribose-phosphate pyrophosphokinase (314 aa).

Residues 37–39 (DGE) and 96–97 (RQ) each bind ATP. The Mg(2+) site is built by histidine 131 and aspartate 170. Residue lysine 194 is part of the active site. Residues arginine 196, aspartate 220, and 224 to 228 (DTGGT) each bind D-ribose 5-phosphate.

Belongs to the ribose-phosphate pyrophosphokinase family. Class I subfamily. In terms of assembly, homohexamer. It depends on Mg(2+) as a cofactor.

The protein resides in the cytoplasm. The enzyme catalyses D-ribose 5-phosphate + ATP = 5-phospho-alpha-D-ribose 1-diphosphate + AMP + H(+). Its pathway is metabolic intermediate biosynthesis; 5-phospho-alpha-D-ribose 1-diphosphate biosynthesis; 5-phospho-alpha-D-ribose 1-diphosphate from D-ribose 5-phosphate (route I): step 1/1. In terms of biological role, involved in the biosynthesis of the central metabolite phospho-alpha-D-ribosyl-1-pyrophosphate (PRPP) via the transfer of pyrophosphoryl group from ATP to 1-hydroxyl of ribose-5-phosphate (Rib-5-P). The polypeptide is Ribose-phosphate pyrophosphokinase (Vibrio parahaemolyticus serotype O3:K6 (strain RIMD 2210633)).